Consider the following 345-residue polypeptide: Fe-S cluster assembly protein DRE2 (345 aa).

Residues 11 to 166 (FSHSSNGVVL…SIGSSSGSSS (156 aa)) are N-terminal SAM-like domain. A disordered region spans residues 147–166 (SKPATASSSFSIGSSSGSSS). Low complexity predominate over residues 153–166 (SSSFSIGSSSGSSS). Residues 167–210 (ALPLRRKLGSGASANAKKSLWATQPASANDLIDEASLLRDADFV) are linker. 4 residues coordinate [2Fe-2S] cluster: cysteine 220, cysteine 233, cysteine 236, and cysteine 238. A fe-S binding site A region spans residues 220–238 (CDVGAGQGKKKKACKGCTC). [4Fe-4S] cluster is bound by residues cysteine 307, cysteine 310, cysteine 318, and cysteine 321. Short sequence motifs (cx2C motif) lie at residues 307–310 (CGSC) and 318–321 (CSSC). The tract at residues 307 to 321 (CGSCFLGDAFRCSSC) is fe-S binding site B.

It belongs to the anamorsin family. As to quaternary structure, monomer. Interacts with TAH18. Interacts with MIA40. Requires [2Fe-2S] cluster as cofactor. It depends on [4Fe-4S] cluster as a cofactor.

It localises to the cytoplasm. The protein resides in the mitochondrion intermembrane space. In terms of biological role, component of the cytosolic iron-sulfur (Fe-S) protein assembly (CIA) machinery required for the maturation of extramitochondrial Fe-S proteins. Part of an electron transfer chain functioning in an early step of cytosolic Fe-S biogenesis, facilitating the de novo assembly of a [4Fe-4S] cluster on the scaffold complex CFD1-NBP35. Electrons are transferred to DRE2 from NADPH via the FAD- and FMN-containing protein TAH18. TAH18-DRE2 are also required for the assembly of the diferric tyrosyl radical cofactor of ribonucleotide reductase (RNR), probably by providing electrons for reduction during radical cofactor maturation in the catalytic small subunit RNR2. This is Fe-S cluster assembly protein DRE2 from Mycosarcoma maydis (Corn smut fungus).